We begin with the raw amino-acid sequence, 440 residues long: Histidinol dehydrogenase (440 aa).

Residues Y134, Q196, and N219 each coordinate NAD(+). The substrate site is built by S242, Q264, and H267. Zn(2+) is bound by residues Q264 and H267. Catalysis depends on proton acceptor residues E332 and H333. Residues H333, D366, E420, and H425 each contribute to the substrate site. D366 is a binding site for Zn(2+). A Zn(2+)-binding site is contributed by H425.

Belongs to the histidinol dehydrogenase family. Zn(2+) serves as cofactor.

It carries out the reaction L-histidinol + 2 NAD(+) + H2O = L-histidine + 2 NADH + 3 H(+). The protein operates within amino-acid biosynthesis; L-histidine biosynthesis; L-histidine from 5-phospho-alpha-D-ribose 1-diphosphate: step 9/9. Functionally, catalyzes the sequential NAD-dependent oxidations of L-histidinol to L-histidinaldehyde and then to L-histidine. This is Histidinol dehydrogenase from Prochlorococcus marinus (strain SARG / CCMP1375 / SS120).